The sequence spans 483 residues: Probable zinc metalloprotease PTT_08196 (483 aa).

An N-terminal signal peptide occupies residues 1 to 18 (MLFRSVILSNALLLPACA). Residues Asn-96 and Asn-121 are each glycosylated (N-linked (GlcNAc...) asparagine). Residues His-167, Asp-187, and Glu-220 each contribute to the Zn(2+) site. Asn-235 carries N-linked (GlcNAc...) asparagine glycosylation. Asp-247 lines the Zn(2+) pocket. Residues Asn-310, Asn-362, Asn-401, Asn-411, and Asn-421 are each glycosylated (N-linked (GlcNAc...) asparagine). The Fibronectin type-III domain occupies 396–483 (PAMPRNVTID…KSPAVYPFPA (88 aa)).

It belongs to the peptidase M28 family. M28B subfamily. The cofactor is Zn(2+).

It localises to the secreted. This is Probable zinc metalloprotease PTT_08196 from Pyrenophora teres f. teres (strain 0-1) (Barley net blotch fungus).